A 327-amino-acid polypeptide reads, in one-letter code: Mitochondrial substrate carrier family protein A (327 aa).

The disordered stretch occupies residues 1–36 (MVINNQNNNNQNNNQNNNNKNDNLNNSTTTTTTTAT). The Mitochondrial intermembrane portion of the chain corresponds to 1–48 (MVINNQNNNNQNNNQNNNNKNDNLNNSTTTTTTTATTTKSSTLFHSND). Solcar repeat units follow at residues 43–132 (LFHS…FKRM), 140–224 (ISVI…IKEK), and 233–323 (PPLY…AITL). A helical transmembrane segment spans residues 49–66 (FFSGLIAGIVSRTLTAPL). The Mitochondrial matrix segment spans residues 67 to 106 (ERIKILNQVEVILKDGTKYNRIIPAFKVIIKEEGIAGLFR). The chain crosses the membrane as a helical span at residues 107 to 127 (GNFVNIIKAGPQSAIRFYSYG). Residues 128-145 (AFKRMASEPDGSISVINR) are Mitochondrial intermembrane-facing. A helical membrane pass occupies residues 146–166 (MWAGASSGVVSVALTHPLDVI). The Mitochondrial matrix segment spans residues 167–192 (KTHITVIAPTAATIKNVTKGIYRDLG). The chain crosses the membrane as a helical span at residues 193–213 (IIGFFRGLSAGILNIAPFAAL). Residues 214–238 (NFTFYETIKEKTQQYILKSPPLYAP) lie on the Mitochondrial intermembrane side of the membrane. The chain crosses the membrane as a helical span at residues 239–259 (SIYGAISGGLTMTILYPLDVV). Residues 260-303 (KRRIMLQHFDRNQLPIYKNFIDAIIKITKTEGISALYKGIRPAY) lie on the Mitochondrial matrix side of the membrane. The chain crosses the membrane as a helical span at residues 304-324 (LKVIPTVSINFLIYEGAITLF). Over 325 to 327 (EKK) the chain is Mitochondrial intermembrane.

Belongs to the mitochondrial carrier (TC 2.A.29) family.

The protein resides in the mitochondrion inner membrane. In terms of biological role, calcium-dependent mitochondrial solute carrier. Mitochondrial solute carriers shuttle metabolites, nucleotides, and cofactors through the mitochondrial inner membrane. The chain is Mitochondrial substrate carrier family protein A (mcfA) from Dictyostelium discoideum (Social amoeba).